The sequence spans 297 residues: Formamidopyrimidine-DNA glycosylase (297 aa).

Catalysis depends on proline 2, which acts as the Schiff-base intermediate with DNA. Glutamate 3 functions as the Proton donor in the catalytic mechanism. Catalysis depends on lysine 58, which acts as the Proton donor; for beta-elimination activity. Residues histidine 106, arginine 125, and arginine 168 each coordinate DNA. The FPG-type zinc finger occupies 259–295; it reads RVYDREGLACTARGCRGVVRRVVQSGRSTFFCEVCQP. Arginine 285 functions as the Proton donor; for delta-elimination activity in the catalytic mechanism.

It belongs to the FPG family. As to quaternary structure, monomer. Zn(2+) serves as cofactor.

The catalysed reaction is Hydrolysis of DNA containing ring-opened 7-methylguanine residues, releasing 2,6-diamino-4-hydroxy-5-(N-methyl)formamidopyrimidine.. It carries out the reaction 2'-deoxyribonucleotide-(2'-deoxyribose 5'-phosphate)-2'-deoxyribonucleotide-DNA = a 3'-end 2'-deoxyribonucleotide-(2,3-dehydro-2,3-deoxyribose 5'-phosphate)-DNA + a 5'-end 5'-phospho-2'-deoxyribonucleoside-DNA + H(+). Its function is as follows. Involved in base excision repair of DNA damaged by oxidation or by mutagenic agents. Acts as a DNA glycosylase that recognizes and removes damaged bases. Has a preference for oxidized purines, such as 7,8-dihydro-8-oxoguanine (8-oxoG). Has AP (apurinic/apyrimidinic) lyase activity and introduces nicks in the DNA strand. Cleaves the DNA backbone by beta-delta elimination to generate a single-strand break at the site of the removed base with both 3'- and 5'-phosphates. This Methylobacterium nodulans (strain LMG 21967 / CNCM I-2342 / ORS 2060) protein is Formamidopyrimidine-DNA glycosylase.